The sequence spans 158 residues: Endoribonuclease YbeY (158 aa).

Residues His118, His122, and His128 each contribute to the Zn(2+) site.

Belongs to the endoribonuclease YbeY family. Zn(2+) serves as cofactor.

It is found in the cytoplasm. In terms of biological role, single strand-specific metallo-endoribonuclease involved in late-stage 70S ribosome quality control and in maturation of the 3' terminus of the 16S rRNA. This chain is Endoribonuclease YbeY, found in Bartonella bacilliformis (strain ATCC 35685 / KC583 / Herrer 020/F12,63).